Here is a 247-residue protein sequence, read N- to C-terminus: Phosphate import ATP-binding protein PstB (247 aa).

Residues 2 to 242 (CRDVNVYYGE…PRHPLTEDYI (241 aa)) form the ABC transporter domain. 32–39 (GPSGCGKS) provides a ligand contact to ATP.

It belongs to the ABC transporter superfamily. Phosphate importer (TC 3.A.1.7) family. The complex is composed of two ATP-binding proteins (PstB), two transmembrane proteins (PstC and PstA) and a solute-binding protein (PstS).

It localises to the cell inner membrane. The enzyme catalyses phosphate(out) + ATP + H2O = ADP + 2 phosphate(in) + H(+). Its function is as follows. Part of the ABC transporter complex PstSACB involved in phosphate import. Responsible for energy coupling to the transport system. The sequence is that of Phosphate import ATP-binding protein PstB from Methylococcus capsulatus (strain ATCC 33009 / NCIMB 11132 / Bath).